Consider the following 449-residue polypeptide: MSDIRHSLLRRDALSAAKEVLYHLDIYFSSQLQSAPLPIVDKGPVELLEEFVFQVPKERSAQPKRLNSLQELQLLEIMCNYFQEQTKDSVRQIIFSSLFSPQGNKADDSRMSLLGKLVSMAVAVCRIPVLECAASWLQRTPVVYCVRLAKALVDDYCCLVPGSIQTLKQIFSASPRFCCQFITSVTALYDLSSDDLIPPMDLLEMIVTWIFEDPRLILITFLNTPIAANLPIGFLELTPLVGLIRWCVKAPLAYKRKKKPPLSNGHVSNKVTKDPGVGMDRDSHLLYSKLHLSVLQVLMTLQLHLTEKNLYGRLGLILFDHMVPLVEEINRLADELNPLNASQEIELSLDRLAQALQVAMASGALLCTRDDLRTLCSRLPHNNLLQLVISGPVQQSPHAALPPGFYPHIHTPPLGYGAVPAHPAAHPALPTHPGHTFISGVTFPFRPIR.

It belongs to the Integrator subunit 15 family. In terms of assembly, component of the Integrator complex, composed of core subunits INTS1, INTS2, INTS3, INTS4, INTS5, INTS6, INTS7, INTS8, INTS9/RC74, INTS10, INTS11/CPSF3L, INTS12, INTS13, INTS14 and INTS15. The core complex associates with protein phosphatase 2A subunits PPP2CA and PPP2R1A, to form the Integrator-PP2A (INTAC) complex. INTS15 is part of the tail subcomplex, composed of INTS10, INTS13, INTS14 and INTS15.

It localises to the nucleus. The protein resides in the chromosome. Component of the integrator complex, a multiprotein complex that terminates RNA polymerase II (Pol II) transcription in the promoter-proximal region of genes. The integrator complex provides a quality checkpoint during transcription elongation by driving premature transcription termination of transcripts that are unfavorably configured for transcriptional elongation: the complex terminates transcription by (1) catalyzing dephosphorylation of the C-terminal domain (CTD) of Pol II subunit POLR2A/RPB1 and SUPT5H/SPT5, (2) degrading the exiting nascent RNA transcript via endonuclease activity and (3) promoting the release of Pol II from bound DNA. The integrator complex is also involved in terminating the synthesis of non-coding Pol II transcripts, such as enhancer RNAs (eRNAs), small nuclear RNAs (snRNAs), telomerase RNAs and long non-coding RNAs (lncRNAs). INTS15 is part of the integrator tail module that acts as a platform for the recruitment of transcription factors at promoters. Within the integrator complex, INTS15 is required to bridge different integrator modules. The chain is Integrator complex subunit 15 from Homo sapiens (Human).